The sequence spans 340 residues: Glycerol-3-phosphate dehydrogenase [NAD(P)+] (340 aa).

Residues Ser-12, Trp-13, and Lys-110 each contribute to the NADPH site. Positions 110, 141, and 143 each coordinate sn-glycerol 3-phosphate. Ala-145 lines the NADPH pocket. Sn-glycerol 3-phosphate-binding residues include Lys-196, Asp-249, Ser-259, Arg-260, and Asn-261. Lys-196 functions as the Proton acceptor in the catalytic mechanism. Arg-260 contributes to the NADPH binding site. The NADPH site is built by Val-284 and Glu-286.

This sequence belongs to the NAD-dependent glycerol-3-phosphate dehydrogenase family.

The protein resides in the cytoplasm. It catalyses the reaction sn-glycerol 3-phosphate + NAD(+) = dihydroxyacetone phosphate + NADH + H(+). It carries out the reaction sn-glycerol 3-phosphate + NADP(+) = dihydroxyacetone phosphate + NADPH + H(+). It functions in the pathway membrane lipid metabolism; glycerophospholipid metabolism. Its function is as follows. Catalyzes the reduction of the glycolytic intermediate dihydroxyacetone phosphate (DHAP) to sn-glycerol 3-phosphate (G3P), the key precursor for phospholipid synthesis. This is Glycerol-3-phosphate dehydrogenase [NAD(P)+] from Latilactobacillus sakei subsp. sakei (strain 23K) (Lactobacillus sakei subsp. sakei).